Here is a 229-residue protein sequence, read N- to C-terminus: Homeobox-leucine zipper protein HOX3 (229 aa).

Residues 1 to 82 (MMGATSPSGL…GPHRPKKLRL (82 aa)) form a disordered region. Acidic residues predominate over residues 52–68 (GEEEEFPMGSVEEDEEE). Positions 75 to 134 (HRPKKLRLSKEQSRLLEESFRLNHTLTPKQKEALAIKLKLRPRQVEVWFQNRRARTKLKQ) form a DNA-binding region, homeobox. The tract at residues 133-177 (KQTEMECEYLKRCFGSLTEENRRLQREVEELRAMRVAPPTVLSPH) is leucine-zipper. The interval 198–229 (AATGPPAVRPPPSSAAAAAPSPFHPRRPSAAF) is disordered.

The protein belongs to the HD-ZIP homeobox family. Class II subfamily. In terms of assembly, homodimer. May form a heterodimer with HOX1, HOX2 or HOX7. Expressed in seedlings, roots, leaves, nodes, internodes, flowers and embryo.

It is found in the nucleus. Its function is as follows. Probable transcription repressor that binds to the DNA sequence 5'-CAAT[GC]ATTG-3'. This Oryza sativa subsp. indica (Rice) protein is Homeobox-leucine zipper protein HOX3 (HOX3).